The primary structure comprises 526 residues: Calcium-dependent protein kinase 28 (526 aa).

Residues 1-37 (MQPDPQPHGRGREKAAGAGPRLPPPVTAPSVGRPASV) are disordered. The region spanning 49 to 307 (YRIGKKLGQG…AHEVLCHPWI (259 aa)) is the Protein kinase domain. Residues 55-63 (LGQGQFGTT) and K78 each bind ATP. Catalysis depends on D173, which acts as the Proton acceptor. The autoinhibitory domain stretch occupies residues 313–343 (APDKPIDSAVLSRLKHFSAMNKLKKMALRVI). EF-hand domains are found at residues 350-385 (EEIGGLKELFKMIDTDNSGTITYDELKNGLKRVGSD), 386-421 (LMEPEIQALMDAADIDNSGTIDYGEFLAATLHMNKL), 422-457 (EREENLVSAFTFFDKDGSGFITIDELSQACEQFGLS), and 460-491 (HLEDMIKDVDQNNDGQIDYSEFAAMMRKGNAG). D363, D365, S367, T369, E374, D399, D401, S403, T405, E410, D435, D437, S439, E446, D469, N471, D473, Q475, and E480 together coordinate Ca(2+).

The protein belongs to the protein kinase superfamily. Ser/Thr protein kinase family. CDPK subfamily.

The enzyme catalyses L-seryl-[protein] + ATP = O-phospho-L-seryl-[protein] + ADP + H(+). It carries out the reaction L-threonyl-[protein] + ATP = O-phospho-L-threonyl-[protein] + ADP + H(+). With respect to regulation, activated by calcium. Autophosphorylation may play an important role in the regulation of the kinase activity. Functionally, may play a role in signal transduction pathways that involve calcium as a second messenger. This is Calcium-dependent protein kinase 28 from Oryza sativa subsp. japonica (Rice).